A 566-amino-acid chain; its full sequence is Acyl-CoA synthetase ALT10 (566 aa).

196-207 (MLFTSGTTGAPK) lines the AMP pocket. The tract at residues 473 to 551 (EVEHAALSHE…DAVHYNRTGK (79 aa)) is AMP-binding.

Belongs to the ATP-dependent AMP-binding enzyme family.

The protein operates within mycotoxin biosynthesis. Its function is as follows. Acyl-CoA synthetase; part of the gene cluster that mediates the biosynthesis of the host-selective toxins (HSTs) AAL-toxins, sphinganine-analog mycotoxins responsible for Alternaria stem canker on tomato by the tomato pathotype. The biosynthesis starts with the polyketide synthase ALT1-catalyzed C-16 carbon chain assembly from one starter acetyl-CoA unit with malonyl-CoA extender units. ALT1 also selectively transfers methyl groups at the first and the third cycle of chain elongation for AAL toxin. The C-16 polyketide chain is released from the enzyme by a nucleophilic attack of a carbanion, which is derived from R-carbon of glycin by decarboxylation, on the carbonyl carbon of polyketide acyl chain. This step is probably catalyzed by a pyridoxal 5'-phosphate-dependent aminoacyl transferase ALT4. The respective functions of the other enzymes encoded by the cluster have still to be elucidated. The sphingosine N-acyltransferase-like protein ALT7 seems not to act as a resistance/self-tolerance factor against the toxin in the toxin biosynthetic gene cluster, contrary to what is expected. The protein is Acyl-CoA synthetase ALT10 of Alternaria alternata (Alternaria rot fungus).